We begin with the raw amino-acid sequence, 200 residues long: ATP-dependent Clp protease proteolytic subunit 1 (200 aa).

The Nucleophile role is filled by S98. H123 is an active-site residue.

Belongs to the peptidase S14 family. Fourteen ClpP subunits assemble into 2 heptameric rings which stack back to back to give a disk-like structure with a central cavity, resembling the structure of eukaryotic proteasomes.

The protein localises to the cytoplasm. It carries out the reaction Hydrolysis of proteins to small peptides in the presence of ATP and magnesium. alpha-casein is the usual test substrate. In the absence of ATP, only oligopeptides shorter than five residues are hydrolyzed (such as succinyl-Leu-Tyr-|-NHMec, and Leu-Tyr-Leu-|-Tyr-Trp, in which cleavage of the -Tyr-|-Leu- and -Tyr-|-Trp bonds also occurs).. Its function is as follows. Cleaves peptides in various proteins in a process that requires ATP hydrolysis. Has a chymotrypsin-like activity. Plays a major role in the degradation of misfolded proteins. The protein is ATP-dependent Clp protease proteolytic subunit 1 of Mycobacterium leprae (strain TN).